The following is a 374-amino-acid chain: Ribosomal RNA large subunit methyltransferase G (374 aa).

This sequence belongs to the methyltransferase superfamily. RlmG family.

Its subcellular location is the cytoplasm. The enzyme catalyses guanosine(1835) in 23S rRNA + S-adenosyl-L-methionine = N(2)-methylguanosine(1835) in 23S rRNA + S-adenosyl-L-homocysteine + H(+). Specifically methylates the guanine in position 1835 (m2G1835) of 23S rRNA. The chain is Ribosomal RNA large subunit methyltransferase G from Pseudomonas putida (strain GB-1).